The primary structure comprises 442 residues: Endothelin receptor type B (442 aa).

Positions 1-26 (MQPPPSLCGRALVALVLACGLSRIWG) are cleaved as a signal peptide. Residues 27-101 (EERGFPPDRA…GPIEIKETFK (75 aa)) lie on the Extracellular side of the membrane. N-linked (GlcNAc...) asparagine glycosylation occurs at asparagine 59. Residues 69–88 (AEVPKGDRTAGSPPRTISPP) form a disordered region. Residues 102–126 (YINTVVSCLVFVLGIIGNSTLLRII) traverse the membrane as a helical segment. The Cytoplasmic portion of the chain corresponds to 127-137 (YKNKCMRNGPN). Residues 138–163 (ILIASLALGDLLHIVIDIPINVYKLL) traverse the membrane as a helical segment. Residues 164-175 (AEDWPFGAEMCK) lie on the Extracellular side of the membrane. Cysteine 174 and cysteine 255 are oxidised to a cystine. A helical transmembrane segment spans residues 176–197 (LVPFIQKASVGITVLSLCALSI). Residues 198-218 (DRYRAVASWSRIKGIGVPKWT) lie on the Cytoplasmic side of the membrane. A helical transmembrane segment spans residues 219–243 (AVEIVLIWVVSVVLAVPEAIGFDII). Over 244–271 (TMDYKGSYLRICLLHPVQKTAFMQFYKT) the chain is Extracellular. Residues 272–296 (AKDWWLFSFYFCLPLAITAFFYTLM) form a helical membrane-spanning segment. At 297 to 324 (TCEMLRKKSGMQIALNDHLKQRREVAKT) the chain is on the cytoplasmic side. The residue at position 305 (serine 305) is a Phosphoserine. A helical membrane pass occupies residues 325–350 (VFCLVLVFALCWLPLHLSRILKLTLY). Topologically, residues 351-362 (NQNDPNRCELLS) are extracellular. Residues 363-389 (FLLVLDYIGINMASLNSCINPIALYLV) form a helical membrane-spanning segment. Over 390–442 (SKRFKNCFKSCLCCWCQSFEEKQSLEEKQSCLKFKANDHGYDNFRSSNKYSSS) the chain is Cytoplasmic. Residues cysteine 402, cysteine 403, and cysteine 405 are each lipidated (S-palmitoyl cysteine). Phosphoserine is present on serine 419. Tyrosine 439 is modified (phosphotyrosine). Residues serine 440, serine 441, and serine 442 each carry the phosphoserine modification.

Belongs to the G-protein coupled receptor 1 family. Endothelin receptor subfamily. EDNRB sub-subfamily. Post-translationally, palmitoylation of Cys-402 was confirmed by the palmitoylation of Cys-402 in a deletion mutant lacking both Cys-403 and Cys-405. In terms of tissue distribution, expressed in placental stem villi vessels, but not in cultured placental villi smooth muscle cells.

It localises to the cell membrane. Its function is as follows. Non-specific receptor for endothelin 1, 2, and 3. Mediates its action by association with G proteins that activate a phosphatidylinositol-calcium second messenger system. This is Endothelin receptor type B from Homo sapiens (Human).